Here is a 777-residue protein sequence, read N- to C-terminus: Transcriptional regulator QRICH1 (777 aa).

The residue at position 1 (Met1) is an N-acetylmethionine. The CARD domain occupies 6-48; the sequence is ENTISFEEYIRVKARSVPQHRMKEFLDSLASKGPEALQEFQQT. Disordered stretches follow at residues 140–164 and 219–240; these read IQGQ…SPSQ and ALSP…VGTA. A Phosphoserine modification is found at Ser346. Glycyl lysine isopeptide (Lys-Gly) (interchain with G-Cter in SUMO2) cross-links involve residues Lys354 and Lys359. A disordered region spans residues 420–440; sequence QQQPQQQTAQEQTPPPQQQQQ. Residue Ser465 is modified to Phosphoserine.

As to expression, expressed highly in prefrontal cortex, craniofacial area and near the limbs of mouse embryos. Expressed in heart, skeletal muscle, liver, kidney, lung, brain, spleen, intestine and growth plate in mice.

Its subcellular location is the nucleus. The protein resides in the cytoplasm. It localises to the cell membrane. In terms of biological role, transcriptional regulator that acts as a mediator of the integrated stress response (ISR) through transcriptional control of protein homeostasis under conditions of ER stress. Controls the outcome of the unfolded protein response (UPR), an ER-stress response pathway that either promotes recovery of ER homeostasis and cell survival, or triggers the terminal UPR which elicits programmed cell death when ER stress is prolonged and unresolved. ER stress induces QRICH1 translation by a ribosome translation re-initiation mechanism in response to EIF2S1/eIF-2-alpha phosphorylation, and stress-induced QRICH1 regulates a transcriptional program associated with protein translation, protein secretion-mediated proteotoxicity and cell death during the terminal UPR. May cooperate with ATF4 transcription factor signaling to regulate ER homeostasis which is critical for cell viability. Up-regulates CASP3/caspase-3 activity in epithelial cells under ER stress. Central regulator of proteotoxicity associated with ER stress-mediated inflammatory diseases in the intestines and liver. Involved in chondrocyte hypertrophy, a process required for normal longitudinal bone growth. The polypeptide is Transcriptional regulator QRICH1 (Mus musculus (Mouse)).